A 208-amino-acid chain; its full sequence is Large ribosomal subunit protein uL3 (208 aa).

N5-methylglutamine is present on Gln-149.

The protein belongs to the universal ribosomal protein uL3 family. Part of the 50S ribosomal subunit. Forms a cluster with proteins L14 and L19. In terms of processing, methylated by PrmB.

Functionally, one of the primary rRNA binding proteins, it binds directly near the 3'-end of the 23S rRNA, where it nucleates assembly of the 50S subunit. In Histophilus somni (strain 129Pt) (Haemophilus somnus), this protein is Large ribosomal subunit protein uL3.